Here is a 234-residue protein sequence, read N- to C-terminus: Proteasome subunit alpha (234 aa).

Belongs to the peptidase T1A family. As to quaternary structure, the 20S proteasome core is composed of 14 alpha and 14 beta subunits that assemble into four stacked heptameric rings, resulting in a barrel-shaped structure. The two inner rings, each composed of seven catalytic beta subunits, are sandwiched by two outer rings, each composed of seven alpha subunits. The catalytic chamber with the active sites is on the inside of the barrel. Has a gated structure, the ends of the cylinder being occluded by the N-termini of the alpha-subunits. Is capped at one or both ends by the proteasome regulatory ATPase, PAN.

The protein resides in the cytoplasm. With respect to regulation, the formation of the proteasomal ATPase PAN-20S proteasome complex, via the docking of the C-termini of PAN into the intersubunit pockets in the alpha-rings, triggers opening of the gate for substrate entry. Interconversion between the open-gate and close-gate conformations leads to a dynamic regulation of the 20S proteasome proteolysis activity. In terms of biological role, component of the proteasome core, a large protease complex with broad specificity involved in protein degradation. In Picrophilus torridus (strain ATCC 700027 / DSM 9790 / JCM 10055 / NBRC 100828 / KAW 2/3), this protein is Proteasome subunit alpha.